The following is a 108-amino-acid chain: uncharacterized protein (108 aa).

The helical transmembrane segment at 25 to 45 (VILKSFLLISSWVILVLLLVI) threads the bilayer.

It localises to the membrane. This is an uncharacterized protein from Saccharomyces cerevisiae (strain ATCC 204508 / S288c) (Baker's yeast).